Here is a 31-residue protein sequence, read N- to C-terminus: Cyclotide hyen-J (31 aa).

Positions 1–31 (GSVPCGESCVWIPCITSIAGCSCSNKVCYMD) form a cross-link, cyclopeptide (Gly-Asp). 3 disulfides stabilise this stretch: C5/C21, C9/C23, and C14/C28.

This is a cyclic peptide. As to expression, detected in seeds (at protein level).

Probably participates in a plant defense mechanism. The polypeptide is Cyclotide hyen-J (Pigea enneasperma (Spade flower)).